A 367-amino-acid polypeptide reads, in one-letter code: Chorismate synthase (367 aa).

Arg48 lines the NADP(+) pocket. Residues 125-127 (RSS), 241-242 (NA), Gly285, 300-304 (KPTSS), and Arg326 each bind FMN.

It belongs to the chorismate synthase family. Homotetramer. It depends on FMNH2 as a cofactor.

The enzyme catalyses 5-O-(1-carboxyvinyl)-3-phosphoshikimate = chorismate + phosphate. Its pathway is metabolic intermediate biosynthesis; chorismate biosynthesis; chorismate from D-erythrose 4-phosphate and phosphoenolpyruvate: step 7/7. In terms of biological role, catalyzes the anti-1,4-elimination of the C-3 phosphate and the C-6 proR hydrogen from 5-enolpyruvylshikimate-3-phosphate (EPSP) to yield chorismate, which is the branch point compound that serves as the starting substrate for the three terminal pathways of aromatic amino acid biosynthesis. This reaction introduces a second double bond into the aromatic ring system. This Dinoroseobacter shibae (strain DSM 16493 / NCIMB 14021 / DFL 12) protein is Chorismate synthase.